A 143-amino-acid polypeptide reads, in one-letter code: Transcriptional regulator MraZ (143 aa).

2 SpoVT-AbrB domains span residues 5 to 47 and 76 to 119; these read EYQH…SLEE and AAEV…DKSK.

The protein belongs to the MraZ family. Forms oligomers.

It localises to the cytoplasm. It is found in the nucleoid. The chain is Transcriptional regulator MraZ from Acetivibrio thermocellus (strain ATCC 27405 / DSM 1237 / JCM 9322 / NBRC 103400 / NCIMB 10682 / NRRL B-4536 / VPI 7372) (Clostridium thermocellum).